The sequence spans 304 residues: Protein INO2 (304 aa).

A bHLH domain is found at 236–290 (VRKWKHVQMEKIRRINTKEAFERLIKSVRTPPKENGKRIPKHILLTCVMNDIKSI).

Efficient DNA binding requires dimerization with another bHLH protein.

It localises to the nucleus. Its function is as follows. Positive regulatory factor required for depression of the coregulated phospholipid biosynthetic enzymes. Also involved in the expression of ITR1. This Saccharomyces cerevisiae (strain ATCC 204508 / S288c) (Baker's yeast) protein is Protein INO2 (INO2).